The following is a 460-amino-acid chain: Exodeoxyribonuclease 7 large subunit (460 aa).

Belongs to the XseA family. Heterooligomer composed of large and small subunits.

It is found in the cytoplasm. It catalyses the reaction Exonucleolytic cleavage in either 5'- to 3'- or 3'- to 5'-direction to yield nucleoside 5'-phosphates.. Bidirectionally degrades single-stranded DNA into large acid-insoluble oligonucleotides, which are then degraded further into small acid-soluble oligonucleotides. The chain is Exodeoxyribonuclease 7 large subunit from Edwardsiella ictaluri (strain 93-146).